The sequence spans 261 residues: MRHPRVAGSFYPANPESLLAMLREYTYPAKDESVIACVSPHAGYVYSGRTAGKVHSLLPDAETFVIVGPNHTGYGLPVAVSTDTWLTPLGEVEVDTEFVEAMPKIITAPDEIAHRYEHSLEVQVPFLQYLHDDFKIVPICLGMQDEETAMEVAEEILTAERETGRKVVVIASSDMHHYLPDEECRRLDSIVIDAILSMDVKKYYETIYRLQASVCGYGCIAVAMYYSKAKGARAELVDYSTSGDVADRSQVVGYAGIVFRV.

The protein belongs to the MEMO1 family.

In Archaeoglobus fulgidus (strain ATCC 49558 / DSM 4304 / JCM 9628 / NBRC 100126 / VC-16), this protein is MEMO1 family protein AF_2310.